The primary structure comprises 439 residues: Methylenetetrahydrofolate--tRNA-(uracil-5-)-methyltransferase TrmFO (439 aa).

9 to 14 (GAGLAG) serves as a coordination point for FAD.

The protein belongs to the MnmG family. TrmFO subfamily. FAD serves as cofactor.

The protein resides in the cytoplasm. It catalyses the reaction uridine(54) in tRNA + (6R)-5,10-methylene-5,6,7,8-tetrahydrofolate + NADH + H(+) = 5-methyluridine(54) in tRNA + (6S)-5,6,7,8-tetrahydrofolate + NAD(+). The enzyme catalyses uridine(54) in tRNA + (6R)-5,10-methylene-5,6,7,8-tetrahydrofolate + NADPH + H(+) = 5-methyluridine(54) in tRNA + (6S)-5,6,7,8-tetrahydrofolate + NADP(+). Catalyzes the folate-dependent formation of 5-methyl-uridine at position 54 (M-5-U54) in all tRNAs. This is Methylenetetrahydrofolate--tRNA-(uracil-5-)-methyltransferase TrmFO from Desulforudis audaxviator (strain MP104C).